We begin with the raw amino-acid sequence, 551 residues long: CTP synthase (551 aa).

The amidoligase domain stretch occupies residues 1 to 267 (MSGTKYIFVT…DALVLEKLGL (267 aa)). A CTP-binding site is contributed by Ser-15. UTP is bound at residue Ser-15. 16-21 (SIGKGT) is a binding site for ATP. L-glutamine is bound at residue Tyr-56. Residue Asp-73 coordinates ATP. 2 residues coordinate Mg(2+): Asp-73 and Glu-141. CTP contacts are provided by residues 148 to 150 (DIE), 188 to 193 (KTKPTQ), and Lys-224. UTP contacts are provided by residues 188–193 (KTKPTQ) and Lys-224. The region spanning 292-534 (RVAVIGKYIR…VGACLGAAEE (243 aa)) is the Glutamine amidotransferase type-1 domain. Gly-355 is a binding site for L-glutamine. The active-site Nucleophile; for glutamine hydrolysis is the Cys-382. L-glutamine contacts are provided by residues 383–386 (LGMQ), Glu-406, and Arg-462. Catalysis depends on residues His-507 and Glu-509.

This sequence belongs to the CTP synthase family. As to quaternary structure, homotetramer.

The enzyme catalyses UTP + L-glutamine + ATP + H2O = CTP + L-glutamate + ADP + phosphate + 2 H(+). It catalyses the reaction L-glutamine + H2O = L-glutamate + NH4(+). The catalysed reaction is UTP + NH4(+) + ATP = CTP + ADP + phosphate + 2 H(+). The protein operates within pyrimidine metabolism; CTP biosynthesis via de novo pathway; CTP from UDP: step 2/2. Its activity is regulated as follows. Allosterically activated by GTP, when glutamine is the substrate; GTP has no effect on the reaction when ammonia is the substrate. The allosteric effector GTP functions by stabilizing the protein conformation that binds the tetrahedral intermediate(s) formed during glutamine hydrolysis. Inhibited by the product CTP, via allosteric rather than competitive inhibition. In terms of biological role, catalyzes the ATP-dependent amination of UTP to CTP with either L-glutamine or ammonia as the source of nitrogen. Regulates intracellular CTP levels through interactions with the four ribonucleotide triphosphates. In Rubrobacter xylanophilus (strain DSM 9941 / JCM 11954 / NBRC 16129 / PRD-1), this protein is CTP synthase.